Here is a 237-residue protein sequence, read N- to C-terminus: 1-(5-phosphoribosyl)-5-[(5-phosphoribosylamino)methylideneamino] imidazole-4-carboxamide isomerase (237 aa).

Catalysis depends on D8, which acts as the Proton acceptor. The active-site Proton donor is D130.

This sequence belongs to the HisA/HisF family.

The protein localises to the cytoplasm. The catalysed reaction is 1-(5-phospho-beta-D-ribosyl)-5-[(5-phospho-beta-D-ribosylamino)methylideneamino]imidazole-4-carboxamide = 5-[(5-phospho-1-deoxy-D-ribulos-1-ylimino)methylamino]-1-(5-phospho-beta-D-ribosyl)imidazole-4-carboxamide. It participates in amino-acid biosynthesis; L-histidine biosynthesis; L-histidine from 5-phospho-alpha-D-ribose 1-diphosphate: step 4/9. The chain is 1-(5-phosphoribosyl)-5-[(5-phosphoribosylamino)methylideneamino] imidazole-4-carboxamide isomerase from Caldicellulosiruptor bescii (strain ATCC BAA-1888 / DSM 6725 / KCTC 15123 / Z-1320) (Anaerocellum thermophilum).